Consider the following 338-residue polypeptide: Holliday junction branch migration complex subunit RuvB (338 aa).

The segment at 1-181 is large ATPase domain (RuvB-L); the sequence is MTRTITPSIT…FGVISRLEFY (181 aa). ATP contacts are provided by residues L20, R21, G62, K65, T66, T67, 128–130, R171, Y181, and R218; that span reads EDF. T66 serves as a coordination point for Mg(2+). The segment at 182–252 is small ATPAse domain (RuvB-S); the sequence is TDEELAFIIT…VVQDALALLE (71 aa). The tract at residues 255–338 is head domain (RuvB-H); sequence EMGFDQMDRM…VPEPPQGKLF (84 aa). Residues R310 and R315 each contribute to the DNA site.

The protein belongs to the RuvB family. As to quaternary structure, homohexamer. Forms an RuvA(8)-RuvB(12)-Holliday junction (HJ) complex. HJ DNA is sandwiched between 2 RuvA tetramers; dsDNA enters through RuvA and exits via RuvB. An RuvB hexamer assembles on each DNA strand where it exits the tetramer. Each RuvB hexamer is contacted by two RuvA subunits (via domain III) on 2 adjacent RuvB subunits; this complex drives branch migration. In the full resolvosome a probable DNA-RuvA(4)-RuvB(12)-RuvC(2) complex forms which resolves the HJ.

The protein localises to the cytoplasm. The enzyme catalyses ATP + H2O = ADP + phosphate + H(+). The RuvA-RuvB-RuvC complex processes Holliday junction (HJ) DNA during genetic recombination and DNA repair, while the RuvA-RuvB complex plays an important role in the rescue of blocked DNA replication forks via replication fork reversal (RFR). RuvA specifically binds to HJ cruciform DNA, conferring on it an open structure. The RuvB hexamer acts as an ATP-dependent pump, pulling dsDNA into and through the RuvAB complex. RuvB forms 2 homohexamers on either side of HJ DNA bound by 1 or 2 RuvA tetramers; 4 subunits per hexamer contact DNA at a time. Coordinated motions by a converter formed by DNA-disengaged RuvB subunits stimulates ATP hydrolysis and nucleotide exchange. Immobilization of the converter enables RuvB to convert the ATP-contained energy into a lever motion, pulling 2 nucleotides of DNA out of the RuvA tetramer per ATP hydrolyzed, thus driving DNA branch migration. The RuvB motors rotate together with the DNA substrate, which together with the progressing nucleotide cycle form the mechanistic basis for DNA recombination by continuous HJ branch migration. Branch migration allows RuvC to scan DNA until it finds its consensus sequence, where it cleaves and resolves cruciform DNA. In Geotalea uraniireducens (strain Rf4) (Geobacter uraniireducens), this protein is Holliday junction branch migration complex subunit RuvB.